A 193-amino-acid polypeptide reads, in one-letter code: ECF RNA polymerase sigma factor SigK (193 aa).

Positions 35 to 101 are sigma-70 factor domain-2; the sequence is LYDRTRSRVY…RRAVDRVRSE (67 aa). A Polymerase core binding motif is present at residues 59–62; the sequence is ETTQ. A sigma-70 factor domain-4 region spans residues 140–187; it reads MGSLSDLQREAIQLAYYEGLTYVQVSERLSANLATIKSRMRGGIRGLK. The segment at residues 161–180 is a DNA-binding region (H-T-H motif); sequence YVQVSERLSANLATIKSRMR.

The protein belongs to the sigma-70 factor family. ECF subfamily. In terms of assembly, interacts transiently with the RNA polymerase catalytic core formed by RpoA, RpoB, RpoC and RpoZ (2 alpha, 1 beta, 1 beta' and 1 omega subunit) to form the RNA polymerase holoenzyme that can initiate transcription. Interacts (via sigma-70 factor domain 4) with anti-sigma-K factor RskA.

Sigma factors are initiation factors that promote the attachment of RNA polymerase to specific initiation sites and are then released. Extracytoplasmic function (ECF) sigma factors are held in an inactive form by an anti-sigma factor until released by regulated intramembrane proteolysis. This chain is ECF RNA polymerase sigma factor SigK (sigK), found in Mycobacterium sp. (strain KMS).